The following is an 81-amino-acid chain: Large ribosomal subunit protein bL31B (81 aa).

It belongs to the bacterial ribosomal protein bL31 family. Type B subfamily. Part of the 50S ribosomal subunit.

The chain is Large ribosomal subunit protein bL31B from Lactococcus lactis subsp. cremoris (strain MG1363).